Reading from the N-terminus, the 290-residue chain is Elongation factor Ts (290 aa).

Residues 81–84 form an involved in Mg(2+) ion dislocation from EF-Tu region; the sequence is TDFV.

Belongs to the EF-Ts family.

It localises to the cytoplasm. Its function is as follows. Associates with the EF-Tu.GDP complex and induces the exchange of GDP to GTP. It remains bound to the aminoacyl-tRNA.EF-Tu.GTP complex up to the GTP hydrolysis stage on the ribosome. This chain is Elongation factor Ts, found in Vesicomyosocius okutanii subsp. Calyptogena okutanii (strain HA).